A 689-amino-acid chain; its full sequence is Glycine--tRNA ligase beta subunit (689 aa).

This sequence belongs to the class-II aminoacyl-tRNA synthetase family. As to quaternary structure, tetramer of two alpha and two beta subunits.

It localises to the cytoplasm. It carries out the reaction tRNA(Gly) + glycine + ATP = glycyl-tRNA(Gly) + AMP + diphosphate. The polypeptide is Glycine--tRNA ligase beta subunit (Oenococcus oeni (strain ATCC BAA-331 / PSU-1)).